The chain runs to 62 residues: Excisionase (62 aa).

The protein is Excisionase (xis) of Streptomyces ambofaciens.